The sequence spans 340 residues: Phosphoribosylformylglycinamidine cyclo-ligase (340 aa).

This sequence belongs to the AIR synthase family.

It is found in the cytoplasm. The catalysed reaction is 2-formamido-N(1)-(5-O-phospho-beta-D-ribosyl)acetamidine + ATP = 5-amino-1-(5-phospho-beta-D-ribosyl)imidazole + ADP + phosphate + H(+). It participates in purine metabolism; IMP biosynthesis via de novo pathway; 5-amino-1-(5-phospho-D-ribosyl)imidazole from N(2)-formyl-N(1)-(5-phospho-D-ribosyl)glycinamide: step 2/2. This is Phosphoribosylformylglycinamidine cyclo-ligase from Streptococcus pyogenes serotype M12 (strain MGAS2096).